Reading from the N-terminus, the 308-residue chain is Protoheme IX farnesyltransferase (308 aa).

Helical transmembrane passes span 20-40, 50-70, 102-122, 124-144, 149-169, 170-190, 227-249, and 288-308; these read LLAY…VTAI, AIHP…AAGA, NALA…WCAT, LLAG…YTLW, TSQN…IGWS, AITG…FFWT, LIYT…WLYG, and YLAV…PTLH.

It belongs to the UbiA prenyltransferase family. Protoheme IX farnesyltransferase subfamily.

It is found in the cell membrane. The catalysed reaction is heme b + (2E,6E)-farnesyl diphosphate + H2O = Fe(II)-heme o + diphosphate. The protein operates within porphyrin-containing compound metabolism; heme O biosynthesis; heme O from protoheme: step 1/1. Converts heme B (protoheme IX) to heme O by substitution of the vinyl group on carbon 2 of heme B porphyrin ring with a hydroxyethyl farnesyl side group. This chain is Protoheme IX farnesyltransferase, found in Mycobacterium tuberculosis (strain ATCC 25618 / H37Rv).